The primary structure comprises 117 residues: Immunoglobulin lambda variable 1-47 (117 aa).

The first 19 residues, 1 to 19 (MAGFPLLLTLLTHCAGSWA), serve as a signal peptide directing secretion. Gln20 bears the Pyrrolidone carboxylic acid mark. The segment at 20–44 (QSVLTQPPSASGTPGQRVTISCSGS) is framework-1. Residues 20-117 (QSVLTQPPSA…CAAWDDSLSG (98 aa)) form the Ig-like domain. Residues Cys41 and Cys108 are joined by a disulfide bond. The tract at residues 45-52 (SSNIGSNY) is complementarity-determining-1. The tract at residues 53–69 (VYWYQQLPGTAPKLLIY) is framework-2. Residues 70-72 (SNN) form a complementarity-determining-2 region. The interval 73-108 (QRPSGVPDRFSGSKSGTSASLAISGLRSEDEADYYC) is framework-3. A complementarity-determining-3 region spans residues 109-117 (AAWDDSLSG).

In terms of assembly, immunoglobulins are composed of two identical heavy chains and two identical light chains; disulfide-linked.

It is found in the secreted. Its subcellular location is the cell membrane. Functionally, v region of the variable domain of immunoglobulin light chains that participates in the antigen recognition. Immunoglobulins, also known as antibodies, are membrane-bound or secreted glycoproteins produced by B lymphocytes. In the recognition phase of humoral immunity, the membrane-bound immunoglobulins serve as receptors which, upon binding of a specific antigen, trigger the clonal expansion and differentiation of B lymphocytes into immunoglobulins-secreting plasma cells. Secreted immunoglobulins mediate the effector phase of humoral immunity, which results in the elimination of bound antigens. The antigen binding site is formed by the variable domain of one heavy chain, together with that of its associated light chain. Thus, each immunoglobulin has two antigen binding sites with remarkable affinity for a particular antigen. The variable domains are assembled by a process called V-(D)-J rearrangement and can then be subjected to somatic hypermutations which, after exposure to antigen and selection, allow affinity maturation for a particular antigen. The protein is Immunoglobulin lambda variable 1-47 of Homo sapiens (Human).